Consider the following 260-residue polypeptide: Thiazole synthase (260 aa).

Lys-96 serves as the catalytic Schiff-base intermediate with DXP. 1-deoxy-D-xylulose 5-phosphate contacts are provided by residues Gly-157, 184–185, and 206–207; these read AG and NT.

The protein belongs to the ThiG family. In terms of assembly, homotetramer. Forms heterodimers with either ThiH or ThiS.

It localises to the cytoplasm. The catalysed reaction is [ThiS sulfur-carrier protein]-C-terminal-Gly-aminoethanethioate + 2-iminoacetate + 1-deoxy-D-xylulose 5-phosphate = [ThiS sulfur-carrier protein]-C-terminal Gly-Gly + 2-[(2R,5Z)-2-carboxy-4-methylthiazol-5(2H)-ylidene]ethyl phosphate + 2 H2O + H(+). The protein operates within cofactor biosynthesis; thiamine diphosphate biosynthesis. Catalyzes the rearrangement of 1-deoxy-D-xylulose 5-phosphate (DXP) to produce the thiazole phosphate moiety of thiamine. Sulfur is provided by the thiocarboxylate moiety of the carrier protein ThiS. In vitro, sulfur can be provided by H(2)S. The chain is Thiazole synthase from Rhodopseudomonas palustris (strain BisB5).